A 151-amino-acid polypeptide reads, in one-letter code: Protein Turandot Z (151 aa).

Residues 1–23 form the signal peptide; it reads MSRLIHLSFVLALLACLTGTISA.

It belongs to the Turandot family.

It is found in the secreted. Its function is as follows. A humoral factor that may play a role in stress tolerance. The protein is Protein Turandot Z of Drosophila persimilis (Fruit fly).